Here is a 132-residue protein sequence, read N- to C-terminus: Small ribosomal subunit protein uS9 (132 aa).

This sequence belongs to the universal ribosomal protein uS9 family.

The chain is Small ribosomal subunit protein uS9 from Blochmanniella pennsylvanica (strain BPEN).